The following is a 361-amino-acid chain: Phospho-N-acetylmuramoyl-pentapeptide-transferase (361 aa).

A run of 10 helical transmembrane segments spans residues 28 to 48, 73 to 93, 97 to 117, 134 to 154, 168 to 188, 200 to 220, 237 to 257, 264 to 284, 289 to 309, and 338 to 358; these read LAAL…IRSL, TMGG…WADL, YIWL…VDDY, FFWQ…TAEL, VAIP…IVGS, GLAI…AYVA, AGEL…FLWF, VFMG…ITVI, IVLV…MIQV, and QVVV…LSTL.

This sequence belongs to the glycosyltransferase 4 family. MraY subfamily. The cofactor is Mg(2+).

The protein localises to the cell inner membrane. It catalyses the reaction UDP-N-acetyl-alpha-D-muramoyl-L-alanyl-gamma-D-glutamyl-meso-2,6-diaminopimeloyl-D-alanyl-D-alanine + di-trans,octa-cis-undecaprenyl phosphate = di-trans,octa-cis-undecaprenyl diphospho-N-acetyl-alpha-D-muramoyl-L-alanyl-D-glutamyl-meso-2,6-diaminopimeloyl-D-alanyl-D-alanine + UMP. It participates in cell wall biogenesis; peptidoglycan biosynthesis. Functionally, catalyzes the initial step of the lipid cycle reactions in the biosynthesis of the cell wall peptidoglycan: transfers peptidoglycan precursor phospho-MurNAc-pentapeptide from UDP-MurNAc-pentapeptide onto the lipid carrier undecaprenyl phosphate, yielding undecaprenyl-pyrophosphoryl-MurNAc-pentapeptide, known as lipid I. The sequence is that of Phospho-N-acetylmuramoyl-pentapeptide-transferase from Nitrosomonas eutropha (strain DSM 101675 / C91 / Nm57).